Here is a 400-residue protein sequence, read N- to C-terminus: Methylthioribose kinase (400 aa).

Residues asparagine 40, lysine 57, and 111–113 (EDL) each bind ATP. Aspartate 229 lines the substrate pocket. 246–248 (DAE) lines the ATP pocket. Arginine 344 contacts substrate.

It belongs to the methylthioribose kinase family. Homodimer.

The enzyme catalyses 5-(methylsulfanyl)-D-ribose + ATP = 5-(methylsulfanyl)-alpha-D-ribose 1-phosphate + ADP + H(+). Its pathway is amino-acid biosynthesis; L-methionine biosynthesis via salvage pathway; S-methyl-5-thio-alpha-D-ribose 1-phosphate from S-methyl-5'-thioadenosine (hydrolase route): step 2/2. Its function is as follows. Catalyzes the phosphorylation of methylthioribose into methylthioribose-1-phosphate. This chain is Methylthioribose kinase, found in Pectobacterium atrosepticum (strain SCRI 1043 / ATCC BAA-672) (Erwinia carotovora subsp. atroseptica).